The sequence spans 173 residues: Photosystem I assembly protein Ycf3 (173 aa).

TPR repeat units lie at residues 35-68, 72-105, and 120-153; these read AYIY…EENK, GETL…NPKQ, and GRYA…YPGG.

It belongs to the Ycf3 family.

It is found in the cellular thylakoid membrane. In terms of biological role, essential for the assembly of the photosystem I (PSI) complex. May act as a chaperone-like factor to guide the assembly of the PSI subunits. The protein is Photosystem I assembly protein Ycf3 of Prochlorococcus marinus (strain MIT 9215).